The primary structure comprises 88 residues: Small ribosomal subunit protein bS20 (88 aa).

Positions 1–21 are enriched in basic residues; it reads MANSKSAKKRALQSEKRRQHN. A disordered region spans residues 1 to 27; it reads MANSKSAKKRALQSEKRRQHNASRSSM.

The protein belongs to the bacterial ribosomal protein bS20 family.

In terms of biological role, binds directly to 16S ribosomal RNA. This Shewanella piezotolerans (strain WP3 / JCM 13877) protein is Small ribosomal subunit protein bS20.